The chain runs to 83 residues: MSSGGLLLLLGPLTLWEVLTPVSSTDRPEFCELPEDSGPCKGLFHVFYYNSDQNQCLEFIYGGCYGNANNFKTIEECKRTCAA.

Positions 1 to 24 (MSSGGLLLLLGPLTLWEVLTPVSS) are cleaved as a signal peptide. Residues 31 to 81 (CELPEDSGPCKGLFHVFYYNSDQNQCLEFIYGGCYGNANNFKTIEECKRTC) form the BPTI/Kunitz inhibitor domain. Intrachain disulfides connect Cys-31/Cys-81, Cys-40/Cys-64, and Cys-56/Cys-77.

Belongs to the venom Kunitz-type family. In terms of tissue distribution, expressed by the venom gland.

Its subcellular location is the secreted. Its function is as follows. Serine protease inhibitor. This Cryptophis nigrescens (Eastern small-eyed snake) protein is Kunitz-type serine protease inhibitor nigrescinin-5.